Reading from the N-terminus, the 433-residue chain is Enolase (433 aa).

Residue glutamine 167 coordinates (2R)-2-phosphoglycerate. Glutamate 209 (proton donor) is an active-site residue. 3 residues coordinate Mg(2+): aspartate 246, glutamate 291, and aspartate 318. (2R)-2-phosphoglycerate-binding residues include lysine 343, arginine 372, serine 373, and lysine 394. Catalysis depends on lysine 343, which acts as the Proton acceptor.

The protein belongs to the enolase family. In terms of assembly, component of the RNA degradosome, a multiprotein complex involved in RNA processing and mRNA degradation. The cofactor is Mg(2+).

It localises to the cytoplasm. The protein localises to the secreted. It is found in the cell surface. The catalysed reaction is (2R)-2-phosphoglycerate = phosphoenolpyruvate + H2O. It participates in carbohydrate degradation; glycolysis; pyruvate from D-glyceraldehyde 3-phosphate: step 4/5. Catalyzes the reversible conversion of 2-phosphoglycerate (2-PG) into phosphoenolpyruvate (PEP). It is essential for the degradation of carbohydrates via glycolysis. The sequence is that of Enolase from Vibrio vulnificus (strain YJ016).